Consider the following 513-residue polypeptide: Histidine ammonia-lyase (513 aa).

The segment at residues 146–148 (ASG) is a cross-link (5-imidazolinone (Ala-Gly)). Position 147 is a 2,3-didehydroalanine (Ser) (serine 147).

It belongs to the PAL/histidase family. In terms of processing, contains an active site 4-methylidene-imidazol-5-one (MIO), which is formed autocatalytically by cyclization and dehydration of residues Ala-Ser-Gly.

The protein resides in the cytoplasm. It carries out the reaction L-histidine = trans-urocanate + NH4(+). Its pathway is amino-acid degradation; L-histidine degradation into L-glutamate; N-formimidoyl-L-glutamate from L-histidine: step 1/3. This chain is Histidine ammonia-lyase, found in Caulobacter vibrioides (strain NA1000 / CB15N) (Caulobacter crescentus).